A 416-amino-acid chain; its full sequence is Multifunctional CCA protein (416 aa).

2 residues coordinate ATP: Gly-8 and Arg-11. The CTP site is built by Gly-8 and Arg-11. Mg(2+)-binding residues include Asp-21 and Asp-23. Residues Arg-91, Arg-138, and Arg-141 each contribute to the ATP site. Residues Arg-91, Arg-138, and Arg-141 each contribute to the CTP site. Positions 229–331 (TGLHQELVSD…YELLQRCDAF (103 aa)) constitute an HD domain.

The protein belongs to the tRNA nucleotidyltransferase/poly(A) polymerase family. Bacterial CCA-adding enzyme type 1 subfamily. As to quaternary structure, monomer. Can also form homodimers and oligomers. Requires Mg(2+) as cofactor. Ni(2+) serves as cofactor.

It carries out the reaction a tRNA precursor + 2 CTP + ATP = a tRNA with a 3' CCA end + 3 diphosphate. It catalyses the reaction a tRNA with a 3' CCA end + 2 CTP + ATP = a tRNA with a 3' CCACCA end + 3 diphosphate. Functionally, catalyzes the addition and repair of the essential 3'-terminal CCA sequence in tRNAs without using a nucleic acid template. Adds these three nucleotides in the order of C, C, and A to the tRNA nucleotide-73, using CTP and ATP as substrates and producing inorganic pyrophosphate. tRNA 3'-terminal CCA addition is required both for tRNA processing and repair. Also involved in tRNA surveillance by mediating tandem CCA addition to generate a CCACCA at the 3' terminus of unstable tRNAs. While stable tRNAs receive only 3'-terminal CCA, unstable tRNAs are marked with CCACCA and rapidly degraded. This chain is Multifunctional CCA protein, found in Xylella fastidiosa (strain M12).